The chain runs to 238 residues: Pyridoxine 5'-phosphate synthase (238 aa).

N7 contributes to the 3-amino-2-oxopropyl phosphate binding site. Residue 9–10 (DH) coordinates 1-deoxy-D-xylulose 5-phosphate. Position 18 (R18) interacts with 3-amino-2-oxopropyl phosphate. Catalysis depends on H43, which acts as the Proton acceptor. Positions 45 and 50 each coordinate 1-deoxy-D-xylulose 5-phosphate. E70 functions as the Proton acceptor in the catalytic mechanism. T100 contributes to the 1-deoxy-D-xylulose 5-phosphate binding site. H190 functions as the Proton donor in the catalytic mechanism. 3-amino-2-oxopropyl phosphate is bound by residues G191 and 212 to 213 (GH).

Belongs to the PNP synthase family. In terms of assembly, homooctamer; tetramer of dimers.

It is found in the cytoplasm. It carries out the reaction 3-amino-2-oxopropyl phosphate + 1-deoxy-D-xylulose 5-phosphate = pyridoxine 5'-phosphate + phosphate + 2 H2O + H(+). It functions in the pathway cofactor biosynthesis; pyridoxine 5'-phosphate biosynthesis; pyridoxine 5'-phosphate from D-erythrose 4-phosphate: step 5/5. Functionally, catalyzes the complicated ring closure reaction between the two acyclic compounds 1-deoxy-D-xylulose-5-phosphate (DXP) and 3-amino-2-oxopropyl phosphate (1-amino-acetone-3-phosphate or AAP) to form pyridoxine 5'-phosphate (PNP) and inorganic phosphate. This is Pyridoxine 5'-phosphate synthase from Prochlorococcus marinus (strain AS9601).